We begin with the raw amino-acid sequence, 33 residues long: Protamine-2C (33 aa).

The disordered stretch occupies residues 1–33 (MPRRRRSSRRPVRRRRRPRVSRRRRRRGGRRRR).

In terms of tissue distribution, testis.

It localises to the nucleus. It is found in the chromosome. Its function is as follows. Protamines substitute for histones in the chromatin of sperm during the haploid phase of spermatogenesis. They compact sperm DNA into a highly condensed, stable and inactive complex. This chain is Protamine-2C, found in Oncorhynchus mykiss (Rainbow trout).